Reading from the N-terminus, the 348-residue chain is Sulfate/thiosulfate import ATP-binding protein CysA (348 aa).

An ABC transporter domain is found at 3–237 (IEVRNIVKEF…PASAFVHGFI (235 aa)). 35-42 (GPSGSGKT) is a binding site for ATP.

It belongs to the ABC transporter superfamily. Sulfate/tungstate importer (TC 3.A.1.6) family. As to quaternary structure, the complex is composed of two ATP-binding proteins (CysA), two transmembrane proteins (CysT and CysW) and a solute-binding protein (CysP).

Its subcellular location is the cell inner membrane. It carries out the reaction sulfate(out) + ATP + H2O = sulfate(in) + ADP + phosphate + H(+). The catalysed reaction is thiosulfate(out) + ATP + H2O = thiosulfate(in) + ADP + phosphate + H(+). In terms of biological role, part of the ABC transporter complex CysAWTP involved in sulfate/thiosulfate import. Responsible for energy coupling to the transport system. This chain is Sulfate/thiosulfate import ATP-binding protein CysA, found in Rhodopseudomonas palustris (strain ATCC BAA-98 / CGA009).